Consider the following 412-residue polypeptide: MQVYLVGGAVRDYLLGHPYQEKDYVVVGATPEHMLAQGFQPVGKDFPVFLHPETKEEYALARTERKSGQGYHGFQFFTDTTVSLEDDLIRRDLTINAIAMDQDGKIYDPYGGQNDLENKILRHVSEAFAEDPLRVLRVARFAARYFPYGFQIAPETLQLMQTMADSGELDALTPERVWKETSRALMENHADIYFQTLRNCGALKHLFPEIDALFGVPQRPEYHPEVDCGIHTLMSLQQACKSNYSLDVRFAVLVHDLGKALTPAEELPRHIMHEERGIKPVTQLCERLRVPTQTKQLALSVCKEHLKCHQIMSLKPGTLWRLLQRLDVLRRPERVEAFVQACECDAKGRLGLEDRPYPQAQYMREAMQIVRSIKVQDLPENIKGAEIGEMLIQYRIEALAEFKNQHQSLSHS.

2 residues coordinate ATP: Gly-8 and Arg-11. Residues Gly-8 and Arg-11 each contribute to the CTP site. Residues Glu-21 and Asp-23 each coordinate Mg(2+). Residues Arg-91, Arg-137, and Arg-140 each coordinate ATP. Residues Arg-91, Arg-137, and Arg-140 each coordinate CTP. The 102-residue stretch at 228 to 329 (CGIHTLMSLQ…WRLLQRLDVL (102 aa)) folds into the HD domain.

Belongs to the tRNA nucleotidyltransferase/poly(A) polymerase family. Bacterial CCA-adding enzyme type 1 subfamily. In terms of assembly, monomer. Can also form homodimers and oligomers. It depends on Mg(2+) as a cofactor. Requires Ni(2+) as cofactor.

It carries out the reaction a tRNA precursor + 2 CTP + ATP = a tRNA with a 3' CCA end + 3 diphosphate. The catalysed reaction is a tRNA with a 3' CCA end + 2 CTP + ATP = a tRNA with a 3' CCACCA end + 3 diphosphate. Functionally, catalyzes the addition and repair of the essential 3'-terminal CCA sequence in tRNAs without using a nucleic acid template. Adds these three nucleotides in the order of C, C, and A to the tRNA nucleotide-73, using CTP and ATP as substrates and producing inorganic pyrophosphate. tRNA 3'-terminal CCA addition is required both for tRNA processing and repair. Also involved in tRNA surveillance by mediating tandem CCA addition to generate a CCACCA at the 3' terminus of unstable tRNAs. While stable tRNAs receive only 3'-terminal CCA, unstable tRNAs are marked with CCACCA and rapidly degraded. In Acinetobacter baumannii (strain ATCC 17978 / DSM 105126 / CIP 53.77 / LMG 1025 / NCDC KC755 / 5377), this protein is Multifunctional CCA protein.